We begin with the raw amino-acid sequence, 110 residues long: Large ribosomal subunit protein uL22 (110 aa).

The protein belongs to the universal ribosomal protein uL22 family. Part of the 50S ribosomal subunit.

Functionally, this protein binds specifically to 23S rRNA; its binding is stimulated by other ribosomal proteins, e.g. L4, L17, and L20. It is important during the early stages of 50S assembly. It makes multiple contacts with different domains of the 23S rRNA in the assembled 50S subunit and ribosome. Its function is as follows. The globular domain of the protein is located near the polypeptide exit tunnel on the outside of the subunit, while an extended beta-hairpin is found that lines the wall of the exit tunnel in the center of the 70S ribosome. This chain is Large ribosomal subunit protein uL22, found in Pseudoalteromonas translucida (strain TAC 125).